We begin with the raw amino-acid sequence, 147 residues long: Small ribosomal subunit protein eS19 (147 aa).

This sequence belongs to the eukaryotic ribosomal protein eS19 family. Component of the small ribosomal subunit.

The protein resides in the cytoplasm. It is found in the nucleus. Its function is as follows. Component of the small ribosomal subunit. The ribosome is a large ribonucleoprotein complex responsible for the synthesis of proteins in the cell. Required for pre-rRNA processing and maturation of 40S ribosomal subunits. The polypeptide is Small ribosomal subunit protein eS19 (rps19) (Ictalurus punctatus (Channel catfish)).